Reading from the N-terminus, the 716-residue chain is MIYQSPTIQVELLEDNIAKLCFNAPGSVNKFDRETLASLDAALDSIKQDSNIKALVLTSSKDTFIVGADITEFLGLFAQDDAVLLSWVEQANAVFNKLEDLPFPTASAIKGFALGGGCETILATDFRIADTTAKIGLPETKLGIIPGFGGTVRLPRVIGADNALEWITTGKDQRAEDALKVGAVDSVVAPQALEAAAIQMLKDAVAEKLDWQARRNRKLSALTLPKLEAMMSFTTAKGMVFAVAGKHYPAPMAAVSVIEQASTKGRAEALQIEHQAFIKLAKTDVAKALIGIFLNDQFVKGKAKKAGKLAKEVNNAAVLGAGIMGGGIAYQSASKGTPIVMKDIAQPALDLGLNEAAKLLSAQVARGRSTPEKMAKVLNNITPSLDYAAIKHSDVVVEAVVEHPKIKAQVLAEVEGYVSEDAIIASNTSTISINLLAKSMKKPERFCGMHFFNPVHKMPLVEVIRGEHSSEETIASVVAYASKMGKTPIVVNDCPGFFVNRVLFPYFAGFNGLLAEGGDFAAIDKVMEKQFGWPMGPAYLLDVVGLDTGHHAQAVMAEGFPDRMGKSGTDAIDVMFENKRLGQKNGKGFYVYSVDSRGKPKKDVDPTSYGLLKDAFGELKAFEADDIIARTMIPMIIETVRCLEEGIVASPAEADMGLVYGLGFPPFRGGVFRYLDTMGVANFVALADKYAHLGGLYQVTDAMRTLAANNGSYYQA.

The enoyl-CoA hydratase/isomerase stretch occupies residues 1–189 (MIYQSPTIQV…KVGAVDSVVA (189 aa)). Position 296 (D296) interacts with substrate. The tract at residues 311–716 (KEVNNAAVLG…AANNGSYYQA (406 aa)) is 3-hydroxyacyl-CoA dehydrogenase. NAD(+) contacts are provided by residues M324, D343, 400–402 (VVE), K407, and S429. H450 (for 3-hydroxyacyl-CoA dehydrogenase activity) is an active-site residue. N453 serves as a coordination point for NAD(+). Residues N500 and Y660 each coordinate substrate.

The protein in the N-terminal section; belongs to the enoyl-CoA hydratase/isomerase family. This sequence in the C-terminal section; belongs to the 3-hydroxyacyl-CoA dehydrogenase family. In terms of assembly, heterotetramer of two alpha chains (FadB) and two beta chains (FadA).

It catalyses the reaction a (3S)-3-hydroxyacyl-CoA + NAD(+) = a 3-oxoacyl-CoA + NADH + H(+). The catalysed reaction is a (3S)-3-hydroxyacyl-CoA = a (2E)-enoyl-CoA + H2O. The enzyme catalyses a 4-saturated-(3S)-3-hydroxyacyl-CoA = a (3E)-enoyl-CoA + H2O. It carries out the reaction (3S)-3-hydroxybutanoyl-CoA = (3R)-3-hydroxybutanoyl-CoA. It catalyses the reaction a (3Z)-enoyl-CoA = a 4-saturated (2E)-enoyl-CoA. The catalysed reaction is a (3E)-enoyl-CoA = a 4-saturated (2E)-enoyl-CoA. Its pathway is lipid metabolism; fatty acid beta-oxidation. Its function is as follows. Involved in the aerobic and anaerobic degradation of long-chain fatty acids via beta-oxidation cycle. Catalyzes the formation of 3-oxoacyl-CoA from enoyl-CoA via L-3-hydroxyacyl-CoA. It can also use D-3-hydroxyacyl-CoA and cis-3-enoyl-CoA as substrate. This chain is Fatty acid oxidation complex subunit alpha, found in Shewanella baltica (strain OS185).